The primary structure comprises 547 residues: Phosphomethylpyrimidine synthase (547 aa).

Substrate is bound by residues N150, M179, Y208, H244, 264-266, 305-308, and E344; these read SRG and DGLR. H348 serves as a coordination point for Zn(2+). A substrate-binding site is contributed by Y371. A Zn(2+)-binding site is contributed by H412. Residues C492, C495, and C500 each coordinate [4Fe-4S] cluster.

Belongs to the ThiC family. Requires [4Fe-4S] cluster as cofactor.

It catalyses the reaction 5-amino-1-(5-phospho-beta-D-ribosyl)imidazole + S-adenosyl-L-methionine = 4-amino-2-methyl-5-(phosphooxymethyl)pyrimidine + CO + 5'-deoxyadenosine + formate + L-methionine + 3 H(+). It functions in the pathway cofactor biosynthesis; thiamine diphosphate biosynthesis. In terms of biological role, catalyzes the synthesis of the hydroxymethylpyrimidine phosphate (HMP-P) moiety of thiamine from aminoimidazole ribotide (AIR) in a radical S-adenosyl-L-methionine (SAM)-dependent reaction. The chain is Phosphomethylpyrimidine synthase from Nocardia farcinica (strain IFM 10152).